The following is a 39-amino-acid chain: Photosystem II reaction center protein L (39 aa).

Residues 18–38 (SLYLGVLSVLVLGILFSSYFF) form a helical membrane-spanning segment.

The protein belongs to the PsbL family. As to quaternary structure, PSII is composed of 1 copy each of membrane proteins PsbA, PsbB, PsbC, PsbD, PsbE, PsbF, PsbH, PsbI, PsbJ, PsbK, PsbL, PsbM, PsbT, PsbX, PsbY, Psb30/Ycf12, peripheral proteins PsbO, CyanoQ (PsbQ), PsbU, PsbV and a large number of cofactors. It forms dimeric complexes.

Its subcellular location is the cellular thylakoid membrane. In terms of biological role, one of the components of the core complex of photosystem II (PSII). PSII is a light-driven water:plastoquinone oxidoreductase that uses light energy to abstract electrons from H(2)O, generating O(2) and a proton gradient subsequently used for ATP formation. It consists of a core antenna complex that captures photons, and an electron transfer chain that converts photonic excitation into a charge separation. This subunit is found at the monomer-monomer interface and is required for correct PSII assembly and/or dimerization. In Prochlorococcus marinus (strain MIT 9515), this protein is Photosystem II reaction center protein L.